Here is a 132-residue protein sequence, read N- to C-terminus: Small ribosomal subunit protein uS8c (132 aa).

This sequence belongs to the universal ribosomal protein uS8 family. As to quaternary structure, part of the 30S ribosomal subunit.

The protein resides in the plastid. It localises to the chloroplast. In terms of biological role, one of the primary rRNA binding proteins, it binds directly to 16S rRNA central domain where it helps coordinate assembly of the platform of the 30S subunit. The protein is Small ribosomal subunit protein uS8c (rps8) of Pinus thunbergii (Japanese black pine).